We begin with the raw amino-acid sequence, 365 residues long: Cobalt-precorrin-5B C(1)-methyltransferase (365 aa).

This sequence belongs to the CbiD family.

It carries out the reaction Co-precorrin-5B + S-adenosyl-L-methionine = Co-precorrin-6A + S-adenosyl-L-homocysteine. It participates in cofactor biosynthesis; adenosylcobalamin biosynthesis; cob(II)yrinate a,c-diamide from sirohydrochlorin (anaerobic route): step 6/10. Catalyzes the methylation of C-1 in cobalt-precorrin-5B to form cobalt-precorrin-6A. This is Cobalt-precorrin-5B C(1)-methyltransferase from Paraburkholderia phytofirmans (strain DSM 17436 / LMG 22146 / PsJN) (Burkholderia phytofirmans).